Consider the following 118-residue polypeptide: Putative membrane protein insertion efficiency factor (118 aa).

This sequence belongs to the UPF0161 family.

The protein resides in the cell inner membrane. Could be involved in insertion of integral membrane proteins into the membrane. The chain is Putative membrane protein insertion efficiency factor from Helicobacter pylori (strain P12).